The following is a 475-amino-acid chain: Sulfate adenylyltransferase subunit 1 (475 aa).

The region spanning 25-239 (KSLLRFLTCG…EVLETVEIQR (215 aa)) is the tr-type G domain. Residues 34-41 (GSVDDGKS) form a G1 region. 34–41 (GSVDDGKS) is a GTP binding site. Residues 92 to 96 (GITID) are G2. Residues 113-116 (DTPG) are G3. GTP-binding positions include 113-117 (DTPGH) and 168-171 (NKMD). The tract at residues 168-171 (NKMD) is G4. Residues 206–208 (SAL) form a G5 region.

Belongs to the TRAFAC class translation factor GTPase superfamily. Classic translation factor GTPase family. CysN/NodQ subfamily. In terms of assembly, heterodimer composed of CysD, the smaller subunit, and CysN.

It catalyses the reaction sulfate + ATP + H(+) = adenosine 5'-phosphosulfate + diphosphate. The protein operates within sulfur metabolism; hydrogen sulfide biosynthesis; sulfite from sulfate: step 1/3. Its function is as follows. With CysD forms the ATP sulfurylase (ATPS) that catalyzes the adenylation of sulfate producing adenosine 5'-phosphosulfate (APS) and diphosphate, the first enzymatic step in sulfur assimilation pathway. APS synthesis involves the formation of a high-energy phosphoric-sulfuric acid anhydride bond driven by GTP hydrolysis by CysN coupled to ATP hydrolysis by CysD. The chain is Sulfate adenylyltransferase subunit 1 from Escherichia coli O157:H7.